Reading from the N-terminus, the 157-residue chain is Ribosomal RNA large subunit methyltransferase H (157 aa).

S-adenosyl-L-methionine contacts are provided by residues leucine 73, glycine 105, and 124–129 (LSKMTF).

Belongs to the RNA methyltransferase RlmH family. In terms of assembly, homodimer.

The protein localises to the cytoplasm. It carries out the reaction pseudouridine(1915) in 23S rRNA + S-adenosyl-L-methionine = N(3)-methylpseudouridine(1915) in 23S rRNA + S-adenosyl-L-homocysteine + H(+). In terms of biological role, specifically methylates the pseudouridine at position 1915 (m3Psi1915) in 23S rRNA. The polypeptide is Ribosomal RNA large subunit methyltransferase H (Phocaeicola vulgatus (strain ATCC 8482 / DSM 1447 / JCM 5826 / CCUG 4940 / NBRC 14291 / NCTC 11154) (Bacteroides vulgatus)).